Reading from the N-terminus, the 89-residue chain is Small ribosomal subunit protein uS15 (89 aa).

The protein belongs to the universal ribosomal protein uS15 family. Part of the 30S ribosomal subunit. Forms a bridge to the 50S subunit in the 70S ribosome, contacting the 23S rRNA.

Functionally, one of the primary rRNA binding proteins, it binds directly to 16S rRNA where it helps nucleate assembly of the platform of the 30S subunit by binding and bridging several RNA helices of the 16S rRNA. Forms an intersubunit bridge (bridge B4) with the 23S rRNA of the 50S subunit in the ribosome. The sequence is that of Small ribosomal subunit protein uS15 from Bartonella tribocorum (strain CIP 105476 / IBS 506).